Here is a 324-residue protein sequence, read N- to C-terminus: Glyoxylate/hydroxypyruvate reductase B (324 aa).

Residues Arg237 and Glu266 contribute to the active site. Residue His285 is the Proton donor of the active site.

It belongs to the D-isomer specific 2-hydroxyacid dehydrogenase family. GhrB subfamily. Homodimer.

The protein resides in the cytoplasm. The enzyme catalyses glycolate + NADP(+) = glyoxylate + NADPH + H(+). It catalyses the reaction (R)-glycerate + NAD(+) = 3-hydroxypyruvate + NADH + H(+). It carries out the reaction (R)-glycerate + NADP(+) = 3-hydroxypyruvate + NADPH + H(+). In terms of biological role, catalyzes the NADPH-dependent reduction of glyoxylate and hydroxypyruvate into glycolate and glycerate, respectively. The protein is Glyoxylate/hydroxypyruvate reductase B of Salmonella choleraesuis (strain SC-B67).